The following is a 314-amino-acid chain: Carbamate kinase (314 aa).

Belongs to the carbamate kinase family. As to quaternary structure, homodimer.

It localises to the cytoplasm. The enzyme catalyses hydrogencarbonate + NH4(+) + ATP = carbamoyl phosphate + ADP + H2O + H(+). Carbamate kinase that plays a biosynthetic role in that it produces carbamoyl-phosphate. In Pyrococcus furiosus (strain ATCC 43587 / DSM 3638 / JCM 8422 / Vc1), this protein is Carbamate kinase (cpkA).